A 478-amino-acid chain; its full sequence is D(1B) dopamine receptor (478 aa).

The Extracellular portion of the chain corresponds to 1-38 (MLPPGRNGTAHRARLGLQRQLAQVDAPGGSAAPLGPAQ). N-linked (GlcNAc...) asparagine glycosylation occurs at Asn-7. The helical transmembrane segment at 39-64 (VVTAGLLTLLIVWTLLGNVLVCAAIV) threads the bilayer. Residues 65–75 (RSRHLRAKMTN) are Cytoplasmic-facing. A helical membrane pass occupies residues 76–102 (IFIVSLAVSDLFVALLVMPWKAVAEVA). At 103-111 (GYWPFGAFC) the chain is on the extracellular side. Cys-111 and Cys-211 are disulfide-bonded. Residues 112 to 134 (DIWVAFDIMCSTASILNLCIISV) traverse the membrane as a helical segment. Over 135-153 (DRYWAISRPFRYERKMTQR) the chain is Cytoplasmic. Residues 154 to 179 (VALVMVALAWTLSILISFIPVQLNWH) form a helical membrane-spanning segment. Residues 180-215 (RDKAGSQGREGLLSNETPWEEGWELDGRTENCDSSL) lie on the Extracellular side of the membrane. A helical transmembrane segment spans residues 216 to 240 (NRTYAISSSLISFYIPVAIMIVTYT). The Cytoplasmic portion of the chain corresponds to 241–289 (RIYRIAQVQIRRISSLERAAEHAQSCRSRGACEPDPSLRASIKKETKVF). A helical membrane pass occupies residues 290–317 (KTLSVIMGVFVCCWLPFFILNCMVPFCS). The Extracellular segment spans residues 318 to 335 (SGDAQGPRTGFPCVSETT). Residues 336 to 357 (FDIFVWFGWANSSLNPIIYAFN) form a helical membrane-spanning segment. The Cytoplasmic portion of the chain corresponds to 358 to 478 (ADFRKVFAQL…LTPNCFHKTA (121 aa)). Cys-370 carries the S-palmitoyl cysteine lipid modification. Residues 416-446 (GDREVGEEEEAEEEGPFDHMSQISPTTPDGD) form a disordered region. Positions 420 to 430 (VGEEEEAEEEG) are enriched in acidic residues.

The protein belongs to the G-protein coupled receptor 1 family.

The protein localises to the cell membrane. In terms of biological role, dopamine receptor whose activity is mediated by G proteins which activate adenylyl cyclase. The chain is D(1B) dopamine receptor (Drd5) from Mus musculus (Mouse).